The following is a 190-amino-acid chain: Glutathione peroxidase 2 (190 aa).

Selenocysteine 40 is an active-site residue. Selenocysteine 40 is a non-standard amino acid (selenocysteine).

It belongs to the glutathione peroxidase family. As to quaternary structure, homotetramer. Mostly in liver and gastrointestinal tract, not found in heart or kidney.

The protein localises to the cytoplasm. It localises to the cytosol. The enzyme catalyses 2 glutathione + H2O2 = glutathione disulfide + 2 H2O. The catalysed reaction is a hydroperoxy polyunsaturated fatty acid + 2 glutathione = a hydroxy polyunsaturated fatty acid + glutathione disulfide + H2O. It carries out the reaction tert-butyl hydroperoxide + 2 glutathione = tert-butanol + glutathione disulfide + H2O. It catalyses the reaction cumene hydroperoxide + 2 glutathione = 2-phenylpropan-2-ol + glutathione disulfide + H2O. The enzyme catalyses (13S)-hydroperoxy-(9Z,11E)-octadecadienoate + 2 glutathione = (13S)-hydroxy-(9Z,11E)-octadecadienoate + glutathione disulfide + H2O. The catalysed reaction is (5S)-hydroperoxy-(6E,8Z,11Z,14Z)-eicosatetraenoate + 2 glutathione = (5S)-hydroxy-(6E,8Z,11Z,14Z)-eicosatetraenoate + glutathione disulfide + H2O. It carries out the reaction (12R)-hydroperoxy-(5Z,8Z,10E,14Z)-eicosatetraenoate + 2 glutathione = (12R)-hydroxy-(5Z,8Z,10E,14Z)-eicosatetraenoate + glutathione disulfide + H2O. It catalyses the reaction (15S)-hydroperoxy-(5Z,8Z,11Z,13E)-eicosatetraenoate + 2 glutathione = (15S)-hydroxy-(5Z,8Z,11Z,13E)-eicosatetraenoate + glutathione disulfide + H2O. Its function is as follows. Catalyzes the reduction of hydroperoxides in a glutathione-dependent manner thus regulating cellular redox homeostasis. Can reduce small soluble hydroperoxides such as H2O2, cumene hydroperoxide and tert-butyl hydroperoxide, as well as several fatty acid-derived hydroperoxides. Cannot reduce phosphatidycholine hydroperoxide. The sequence is that of Glutathione peroxidase 2 from Homo sapiens (Human).